The sequence spans 184 residues: Probable chemoreceptor glutamine deamidase CheD (184 aa).

Belongs to the CheD family.

It catalyses the reaction L-glutaminyl-[protein] + H2O = L-glutamyl-[protein] + NH4(+). In terms of biological role, probably deamidates glutamine residues to glutamate on methyl-accepting chemotaxis receptors (MCPs), playing an important role in chemotaxis. The protein is Probable chemoreceptor glutamine deamidase CheD of Rhizobium leguminosarum bv. trifolii (strain WSM2304).